We begin with the raw amino-acid sequence, 253 residues long: Proteasome subunit alpha type-3 (253 aa).

The disordered stretch occupies residues 230–253 (ELTEKARKAGDAANKDEDSDNETH). Basic and acidic residues predominate over residues 231-253 (LTEKARKAGDAANKDEDSDNETH). A Phosphoserine modification is found at serine 248.

Belongs to the peptidase T1A family. In terms of assembly, the 26S proteasome consists of a 20S proteasome core and two 19S regulatory subunits. The 20S proteasome core is composed of 28 subunits that are arranged in four stacked rings, resulting in a barrel-shaped structure. The two end rings are each formed by seven alpha subunits, and the two central rings are each formed by seven beta subunits. The catalytic chamber with the active sites is on the inside of the barrel. Interacts with ntc.

The protein localises to the cytoplasm. It localises to the nucleus. Its function is as follows. The proteasome is a multicatalytic proteinase complex which is characterized by its ability to cleave peptides with Arg, Phe, Tyr, Leu, and Glu adjacent to the leaving group at neutral or slightly basic pH. The proteasome has an ATP-dependent proteolytic activity. This chain is Proteasome subunit alpha type-3 (Prosalpha7), found in Drosophila melanogaster (Fruit fly).